Here is a 50-residue protein sequence, read N- to C-terminus: uncharacterized protein (50 aa).

This is an uncharacterized protein from Saccharomyces cerevisiae (strain ATCC 204508 / S288c) (Baker's yeast).